The following is a 386-amino-acid chain: Protein phosphatase methylesterase 1 (386 aa).

The tract at residues 1–38 is disordered; the sequence is MSALEKSMHLGRLPSRPPLPGSGGSQSGAKMRMGPGRK. Ser15 bears the Phosphoserine mark. Residue Arg16 is modified to Asymmetric dimethylarginine; alternate. Arg16 carries the post-translational modification Omega-N-methylarginine; alternate. The active site involves Ser156. The segment covering 255-265 has biased composition (acidic residues); that stretch reads IEEEEEDEEGS. The disordered stretch occupies residues 255 to 280; it reads IEEEEEDEEGSESVNKRKKEDDMETK. Basic and acidic residues predominate over residues 268-280; that stretch reads VNKRKKEDDMETK. The active site involves His349.

Belongs to the AB hydrolase superfamily. As to quaternary structure, binds PPP2CA and PPP2CB. In terms of processing, phosphorylated by SIK1 following increases in intracellular sodium, leading to dissociation from the protein phosphatase 2A (PP2A) complex and subsequent dephosphorylation of sodium/potassium-transporting ATPase ATP1A1.

The enzyme catalyses [phosphatase 2A protein]-C-terminal L-leucine methyl ester + H2O = [phosphatase 2A protein]-C-terminal L-leucine + methanol + H(+). Demethylates proteins that have been reversibly carboxymethylated. Demethylates PPP2CB (in vitro) and PPP2CA. Binding to PPP2CA displaces the manganese ion and inactivates the enzyme. The protein is Protein phosphatase methylesterase 1 (Ppme1) of Rattus norvegicus (Rat).